A 967-amino-acid polypeptide reads, in one-letter code: Translation initiation factor IF-2 (967 aa).

Disordered regions lie at residues Lys-201–Val-320 and Leu-349–Ala-382. Residues Thr-233–Asn-248 show a composition bias toward polar residues. Residues Pro-256–Asn-272 show a composition bias toward low complexity. Positions Asn-354–Arg-363 are enriched in basic residues. Residues Asp-364–Ala-382 are compositionally biased toward basic and acidic residues. Residues His-465–Lys-635 enclose the tr-type G domain. A G1 region spans residues Gly-474–Thr-481. Gly-474–Thr-481 is a GTP binding site. The interval Gly-499 to His-503 is G2. The G3 stretch occupies residues Asp-521–Gly-524. Residues Asp-521–His-525 and Asn-575–Asp-578 contribute to the GTP site. The G4 stretch occupies residues Asn-575 to Asp-578. A G5 region spans residues Ser-611–Lys-613.

Belongs to the TRAFAC class translation factor GTPase superfamily. Classic translation factor GTPase family. IF-2 subfamily.

The protein localises to the cytoplasm. Its function is as follows. One of the essential components for the initiation of protein synthesis. Protects formylmethionyl-tRNA from spontaneous hydrolysis and promotes its binding to the 30S ribosomal subunits. Also involved in the hydrolysis of GTP during the formation of the 70S ribosomal complex. The polypeptide is Translation initiation factor IF-2 (Flavobacterium psychrophilum (strain ATCC 49511 / DSM 21280 / CIP 103535 / JIP02/86)).